The sequence spans 155 residues: 3-hydroxyacyl-[acyl-carrier-protein] dehydratase FabZ (155 aa).

H59 is an active-site residue.

Belongs to the thioester dehydratase family. FabZ subfamily.

It is found in the cytoplasm. It catalyses the reaction a (3R)-hydroxyacyl-[ACP] = a (2E)-enoyl-[ACP] + H2O. Involved in unsaturated fatty acids biosynthesis. Catalyzes the dehydration of short chain beta-hydroxyacyl-ACPs and long chain saturated and unsaturated beta-hydroxyacyl-ACPs. The polypeptide is 3-hydroxyacyl-[acyl-carrier-protein] dehydratase FabZ (Bartonella quintana (strain Toulouse) (Rochalimaea quintana)).